Reading from the N-terminus, the 545-residue chain is Chaperonin GroEL (545 aa).

ATP-binding positions include threonine 30 to proline 33, lysine 51, aspartate 87 to threonine 91, glycine 415, and aspartate 495.

The protein belongs to the chaperonin (HSP60) family. In terms of assembly, forms a cylinder of 14 subunits composed of two heptameric rings stacked back-to-back. Interacts with the co-chaperonin GroES.

Its subcellular location is the cytoplasm. The catalysed reaction is ATP + H2O + a folded polypeptide = ADP + phosphate + an unfolded polypeptide.. Its function is as follows. Together with its co-chaperonin GroES, plays an essential role in assisting protein folding. The GroEL-GroES system forms a nano-cage that allows encapsulation of the non-native substrate proteins and provides a physical environment optimized to promote and accelerate protein folding. This is Chaperonin GroEL from Shewanella baltica (strain OS185).